The primary structure comprises 388 residues: MNLHEYQAKELLASYGLPVQGGILAHNGEEAAAAYDKLGGKFAVVKAQVHAGGRGKAGGVKVVKSREEAKEVAESLIGTNLVTYQTDANGQPVNSVLVCEDMYPVQTELYLGAVVDRSTRRVTFMASTEGGVEIEKVAAETPEKIFKVTVDPLVGLQPCQAREVAFQLGLKDKQINEFVKLMTGAYKAFVENDFALFEVNPLAVRENGALACVDGKIGIDSNALYRLPKIAELRDKSQENERELKASEFDLNYVALEGNIGCMVNGAGLAMATMDIIKLKGGQPANFLDVGGGATKDRVVEAFKLILEDKSVKGVLINIFGGIVRCDMIAEAIVAAVKEINVDVPVVVRLEGNNAELGAKILNESGLKLTSADGLNDAAEKIVAAVNA.

The region spanning 9–245 (KELLASYGLP…KSQENERELK (237 aa)) is the ATP-grasp domain. Residues lysine 46, 53-55 (GRG), glutamate 100, tyrosine 103, and glutamate 108 contribute to the ATP site. Mg(2+) is bound by residues asparagine 200 and aspartate 214. Residues asparagine 265 and 322–324 (GIV) contribute to the substrate site.

The protein belongs to the succinate/malate CoA ligase beta subunit family. Heterotetramer of two alpha and two beta subunits. It depends on Mg(2+) as a cofactor.

The enzyme catalyses succinate + ATP + CoA = succinyl-CoA + ADP + phosphate. It carries out the reaction GTP + succinate + CoA = succinyl-CoA + GDP + phosphate. Its pathway is carbohydrate metabolism; tricarboxylic acid cycle; succinate from succinyl-CoA (ligase route): step 1/1. Its function is as follows. Succinyl-CoA synthetase functions in the citric acid cycle (TCA), coupling the hydrolysis of succinyl-CoA to the synthesis of either ATP or GTP and thus represents the only step of substrate-level phosphorylation in the TCA. The beta subunit provides nucleotide specificity of the enzyme and binds the substrate succinate, while the binding sites for coenzyme A and phosphate are found in the alpha subunit. The protein is Succinate--CoA ligase [ADP-forming] subunit beta of Neisseria meningitidis serogroup A / serotype 4A (strain DSM 15465 / Z2491).